The following is a 413-amino-acid chain: Putative competence-damage inducible protein (413 aa).

It belongs to the CinA family.

This chain is Putative competence-damage inducible protein, found in Lacticaseibacillus casei (strain BL23) (Lactobacillus casei).